A 70-amino-acid chain; its full sequence is Deleted in esophageal cancer 1 (70 aa).

Expressed in many tissues, with highest expression in prostate and testis. Reduced expression in esophageal carcinomas.

In terms of biological role, candidate tumor suppressor. The chain is Deleted in esophageal cancer 1 from Homo sapiens (Human).